The following is a 28-amino-acid chain: Turritoxin F21-2 (28 aa).

As to expression, expressed by the venom duct.

Its subcellular location is the secreted. In terms of biological role, potent inhibitor of human alpha-3-beta-2 nAChRs (IC(50)=566.2 nM). Irreversibly inhibits the acetylcholine-induced response on human alpha-7/CHRNA7 (55% inhibition at 5.6 uM) and alpha-3-beta-2/CHRNA3-CHRNB2 (91% inhibition) nAChRs. This is Turritoxin F21-2 from Polystira nobilis (Sea snail).